The sequence spans 445 residues: Phosphoglucosamine mutase (445 aa).

Ser102 (phosphoserine intermediate) is an active-site residue. 4 residues coordinate Mg(2+): Ser102, Asp241, Asp243, and Asp245. At Ser102 the chain carries Phosphoserine.

This sequence belongs to the phosphohexose mutase family. The cofactor is Mg(2+). Activated by phosphorylation.

The enzyme catalyses alpha-D-glucosamine 1-phosphate = D-glucosamine 6-phosphate. In terms of biological role, catalyzes the conversion of glucosamine-6-phosphate to glucosamine-1-phosphate. The protein is Phosphoglucosamine mutase of Shewanella halifaxensis (strain HAW-EB4).